Here is a 468-residue protein sequence, read N- to C-terminus: Acyltransferase R4 (468 aa).

Transmembrane regions (helical) follow at residues 21–41 (GILS…LGYD), 70–90 (LFTI…CLFF), 133–153 (LNLL…TGFF), 252–272 (FLAA…PLFW), 308–328 (DPFG…YPTW), 388–408 (FAVY…LFSW), and 423–443 (IGFG…AAMF).

The protein belongs to the acyltransferase 3 family.

Its subcellular location is the membrane. It participates in secondary metabolite biosynthesis. Acyltransferase; part of the gene cluster that mediates the biosynthesis of squalestatin S1 (SQS1, also known as zaragozic acid A), a heavily oxidized fungal polyketide that offers potent cholesterol lowering activity by targeting squalene synthase (SS). SQS1 is composed of a 2,8-dioxobicyclic[3.2.1]octane-3,4,5-tricarboxyclic acid core that is connected to two lipophilic polyketide arms. These initial steps feature the priming of an unusual benzoic acid starter unit onto the highly reducing polyketide synthase pks2, followed by oxaloacetate extension and product release to generate a tricarboxylic acid containing product. The phenylalanine ammonia lyase (PAL) M7 and the acyl-CoA ligase M9 are involved in transforming phenylalanine into benzoyl-CoA. The citrate synthase-like protein R3 is involved in connecting the C-alpha-carbons of the hexaketide chain and oxaloacetate to afford the tricarboxylic acid unit. The potential hydrolytic enzymes, M8 and M10, are in close proximity to pks2 and may participate in product release. On the other side, the tetraketide arm is synthesized by a the squalestatin tetraketide synthase pks1 and enzymatically esterified to the core in the last biosynthetic step, by the acetyltransferase M4. The biosynthesis of the tetraketide must involve 3 rounds of chain extension. After the first and second rounds methyl-transfer occurs, and in all rounds of extension the ketoreductase and dehydratase are active. The enoyl reductase and C-MeT of pks1 are not active in the final round of extension. The acetyltransferase M4 appears to have a broad substrate selectivity for its acyl CoA substrate, allowing the in vitro synthesis of novel squalestatins. The biosynthesis of SQS1 requires several oxidative steps likely performed by oxidoreductases M1, R1 and R2. Finally, in support of the identification of the cluster as being responsible for SQS1 production, the cluster contains a gene encoding a putative squalene synthase (SS) R6, suggesting a likely mechanism for self-resistance. The sequence is that of Acyltransferase R4 from Phoma sp. (strain ATCC 20986 / MF5453).